The sequence spans 121 residues: MIQQESRLIVTDNSGAKEVLCIRVLGGTRRRYASVGDIIVVTVKTVVPSSDIKKGIVSKAIIVRVKKEIRREDGSYIRFDDNACVLLNSTGEIRGSRIFGPVARELRTVNMKIVSLAPEVL.

Belongs to the universal ribosomal protein uL14 family. Part of the 50S ribosomal subunit. Forms a cluster with proteins L3 and L19. In the 70S ribosome, L14 and L19 interact and together make contacts with the 16S rRNA in bridges B5 and B8.

Binds to 23S rRNA. Forms part of two intersubunit bridges in the 70S ribosome. This is Large ribosomal subunit protein uL14 from Azobacteroides pseudotrichonymphae genomovar. CFP2.